A 490-amino-acid chain; its full sequence is Katanin p60 ATPase-containing subunit A-like 1 (490 aa).

Position 1 is an N-acetylmethionine (Met-1). Residues 95-178 (DPAVWPPPVP…MQDGASDGDI (84 aa)) are disordered. Basic and acidic residues predominate over residues 116-127 (PNREVRPLRKDV). Over residues 128–139 (AGVGARGPVGRA) the composition is skewed to low complexity. A compositionally biased stretch (basic and acidic residues) spans 143-169 (SKSEKPSTNKDKDYRARGRDDKGRKNM). The residue at position 174 (Ser-174) is a Phosphoserine. 248-255 (GPPGTGKT) is an ATP binding site.

Belongs to the AAA ATPase family. Katanin p60 subunit A1 subfamily. A-like 1 sub-subfamily. In terms of assembly, interacts with KATNB1 and KATNBL1.

The protein resides in the cytoplasm. Its subcellular location is the cytoskeleton. The protein localises to the spindle pole. It is found in the spindle. It catalyses the reaction n ATP + n H2O + a microtubule = n ADP + n phosphate + (n+1) alpha/beta tubulin heterodimers.. Its function is as follows. Regulates microtubule dynamics in Sertoli cells, a process that is essential for spermiogenesis and male fertility. Severs microtubules in an ATP-dependent manner, promoting rapid reorganization of cellular microtubule arrays. Has microtubule-severing activity in vitro. The sequence is that of Katanin p60 ATPase-containing subunit A-like 1 from Sorex araneus (Eurasian common shrew).